The sequence spans 23 residues: Brevinin-1SE (23 aa).

An intrachain disulfide couples C17 to C23.

Expressed by the skin glands.

Its subcellular location is the secreted. Its function is as follows. Mast cell degranulating peptide. Causes histamine release from rat peritoneal mast cells in vitro. Has antibacterial activity against the Gram-negative bacterium E.coli K12 and Gram-positive bacterium M.luteus NCT C2665. This chain is Brevinin-1SE, found in Lithobates sevosus (Dusky gopher frog).